The primary structure comprises 500 residues: AMP phosphorylase (500 aa).

Residues G166, 192–197 (SRAVTS), and T201 contribute to the AMP site. Residue D254 is the Proton donor of the active site. Positions 262 and 286 each coordinate AMP.

Belongs to the thymidine/pyrimidine-nucleoside phosphorylase family. Type 2 subfamily.

It carries out the reaction AMP + phosphate = alpha-D-ribose 1,5-bisphosphate + adenine. The catalysed reaction is CMP + phosphate = cytosine + alpha-D-ribose 1,5-bisphosphate. It catalyses the reaction UMP + phosphate = alpha-D-ribose 1,5-bisphosphate + uracil. Catalyzes the conversion of AMP and phosphate to adenine and ribose 1,5-bisphosphate (R15P). Exhibits phosphorylase activity toward CMP and UMP in addition to AMP. Functions in an archaeal AMP degradation pathway, together with R15P isomerase and RubisCO. In Natronomonas pharaonis (strain ATCC 35678 / DSM 2160 / CIP 103997 / JCM 8858 / NBRC 14720 / NCIMB 2260 / Gabara) (Halobacterium pharaonis), this protein is AMP phosphorylase (deoA).